The sequence spans 167 residues: MLIFEDVISGDELLSDAYDVKLVDGAVYEADCAMVTVGNGDIDIGANPSAEDGEEALEDGAETVNNVVYSFRLQPTMFDKKSFTTYIKGYMKRIKAYLAENDPDSVEAFEKGATAYVKKVLGSFKDWEFYTGESMDPDAMVVLLNYREDGTTPYVAIWKHGVKENKI.

Positions 1–167 (MLIFEDVISG…WKHGVKENKI (167 aa)) constitute a TCTP domain.

The protein belongs to the TCTP family.

The protein localises to the cytoplasm. It localises to the cytoskeleton. In terms of biological role, involved in protein synthesis. Involved in microtubule stabilization. The chain is Translationally-controlled tumor protein homolog (TMA19) from Candida albicans (strain SC5314 / ATCC MYA-2876) (Yeast).